A 101-amino-acid polypeptide reads, in one-letter code: Large ribosomal subunit protein bL28 (101 aa).

This sequence belongs to the bacterial ribosomal protein bL28 family.

The sequence is that of Large ribosomal subunit protein bL28 from Rhodopseudomonas palustris (strain BisB5).